Here is a 200-residue protein sequence, read N- to C-terminus: Phospholipase A2 inhibitor 1 (200 aa).

Residues 1 to 19 (MKSLHIICLLFIFVARGNS) form the signal peptide. Intrachain disulfides connect cysteine 22/cysteine 46, cysteine 25/cysteine 32, cysteine 39/cysteine 67, cysteine 73/cysteine 94, cysteine 95/cysteine 100, cysteine 118/cysteine 143, cysteine 136/cysteine 165, and cysteine 169/cysteine 191. Residue asparagine 176 is glycosylated (N-linked (GlcNAc...) asparagine).

The protein belongs to the CNF-like-inhibitor family. In terms of assembly, occurs as a mixture of oligomers. Tetrameric arrangement appears to be the predominant quaternary structure. In terms of processing, N-glycosylated. Expressed by the liver.

It is found in the secreted. Functionally, inhibits basic phospholipase A2 isozymes PLA-B, BP-I and BP-II. In Protobothrops flavoviridis (Habu), this protein is Phospholipase A2 inhibitor 1.